A 46-amino-acid chain; its full sequence is Mu-segestritoxin-Sf1h (46 aa).

4 disulfides stabilise this stretch: cysteine 3–cysteine 19, cysteine 10–cysteine 22, cysteine 18–cysteine 42, and cysteine 24–cysteine 40. The tract at residues 31 to 33 (RPW) is keys region for toxin activity.

The protein belongs to the neurotoxin 16 (SFI) family. As to expression, expressed by the venom gland.

It is found in the secreted. Insecticidal toxin. It inhibits insect voltage-gated sodium channels (Nav) by partially blocking the channel pore in DUM neurons from the American cockroach, not by acting as a gating modifier. The inhibition is only partially reversible after prolonged washout. In vivo, the toxin causes flaccid paralysis followed by death when injected into Heliothis virescens larvae. It also causes uncoordinated movements followed by full paralysis to sheep blowflies (Lucilia cuprina). When the toxin is fused to snowdrop lectin, it is orally active against larvae of the tomato moth (Laconobia oleracea), the rice brown planthopper (Nilaparvata lugens), and the peach-potato aphid (Myzus persicae). This is Mu-segestritoxin-Sf1h from Segestria florentina (Tube-web spider).